A 300-amino-acid chain; its full sequence is Pantothenate synthetase (300 aa).

An ATP-binding site is contributed by 30-37; it reads MGYLHEGH. The active-site Proton donor is His-37. Residue Gln-61 coordinates (R)-pantoate. Gln-61 serves as a coordination point for beta-alanine. 147–150 contributes to the ATP binding site; it reads GMKD. A (R)-pantoate-binding site is contributed by Gln-153. Residues Val-176 and 184-187 contribute to the ATP site; that span reads KSSR.

The protein belongs to the pantothenate synthetase family. In terms of assembly, homodimer.

The protein resides in the cytoplasm. It catalyses the reaction (R)-pantoate + beta-alanine + ATP = (R)-pantothenate + AMP + diphosphate + H(+). The protein operates within cofactor biosynthesis; (R)-pantothenate biosynthesis; (R)-pantothenate from (R)-pantoate and beta-alanine: step 1/1. Functionally, catalyzes the condensation of pantoate with beta-alanine in an ATP-dependent reaction via a pantoyl-adenylate intermediate. In Geobacillus kaustophilus (strain HTA426), this protein is Pantothenate synthetase.